A 322-amino-acid polypeptide reads, in one-letter code: uncharacterized protein (322 aa).

Residues M1 to Y63 are disordered. Residues F34–P49 show a composition bias toward basic and acidic residues. The C3H1-type zinc finger occupies W245 to V274. The interval H278–Q322 is disordered. Positions G309–Q322 are enriched in basic residues.

This is an uncharacterized protein from Caenorhabditis elegans.